We begin with the raw amino-acid sequence, 237 residues long: Ribonuclease PH (237 aa).

Phosphate is bound by residues arginine 86 and 124 to 126 (GTR).

It belongs to the RNase PH family. Homohexameric ring arranged as a trimer of dimers.

It carries out the reaction tRNA(n+1) + phosphate = tRNA(n) + a ribonucleoside 5'-diphosphate. In terms of biological role, phosphorolytic 3'-5' exoribonuclease that plays an important role in tRNA 3'-end maturation. Removes nucleotide residues following the 3'-CCA terminus of tRNAs; can also add nucleotides to the ends of RNA molecules by using nucleoside diphosphates as substrates, but this may not be physiologically important. Probably plays a role in initiation of 16S rRNA degradation (leading to ribosome degradation) during starvation. This chain is Ribonuclease PH, found in Rhodopseudomonas palustris (strain HaA2).